The chain runs to 520 residues: Probable cytochrome P450 6v1 (520 aa).

Position 465 (C465) interacts with heme.

This sequence belongs to the cytochrome P450 family. Heme is required as a cofactor.

It localises to the endoplasmic reticulum membrane. Its subcellular location is the microsome membrane. Its function is as follows. May be involved in the metabolism of insect hormones and in the breakdown of synthetic insecticides. This chain is Probable cytochrome P450 6v1 (Cyp6v1), found in Drosophila melanogaster (Fruit fly).